A 155-amino-acid polypeptide reads, in one-letter code: 3-hydroxyacyl-[acyl-carrier-protein] dehydratase FabZ (155 aa).

His-58 is a catalytic residue.

The protein belongs to the thioester dehydratase family. FabZ subfamily.

The protein localises to the cytoplasm. The catalysed reaction is a (3R)-hydroxyacyl-[ACP] = a (2E)-enoyl-[ACP] + H2O. Functionally, involved in unsaturated fatty acids biosynthesis. Catalyzes the dehydration of short chain beta-hydroxyacyl-ACPs and long chain saturated and unsaturated beta-hydroxyacyl-ACPs. The chain is 3-hydroxyacyl-[acyl-carrier-protein] dehydratase FabZ from Rhizobium etli (strain CIAT 652).